A 950-amino-acid polypeptide reads, in one-letter code: Valine--tRNA ligase (950 aa).

Positions 40-50 (PNVTGSLHMGH) match the 'HIGH' region motif. A 'KMSKS' region motif is present at residues 551-555 (KMSKS). Lysine 554 lines the ATP pocket. A coiled-coil region spans residues 881–950 (LIDKSAELGR…AEQRQKIAAL (70 aa)).

The protein belongs to the class-I aminoacyl-tRNA synthetase family. ValS type 1 subfamily. As to quaternary structure, monomer.

It localises to the cytoplasm. The catalysed reaction is tRNA(Val) + L-valine + ATP = L-valyl-tRNA(Val) + AMP + diphosphate. Functionally, catalyzes the attachment of valine to tRNA(Val). As ValRS can inadvertently accommodate and process structurally similar amino acids such as threonine, to avoid such errors, it has a 'posttransfer' editing activity that hydrolyzes mischarged Thr-tRNA(Val) in a tRNA-dependent manner. The protein is Valine--tRNA ligase of Pseudomonas aeruginosa (strain ATCC 15692 / DSM 22644 / CIP 104116 / JCM 14847 / LMG 12228 / 1C / PRS 101 / PAO1).